Reading from the N-terminus, the 303-residue chain is Phosphatidylglycerol--prolipoprotein diacylglyceryl transferase (303 aa).

Transmembrane regions (helical) follow at residues 18-38, 58-78, 106-126, and 133-153; these read LGPF…LVGL, LLPI…VAFE, IWGG…SIIF, and EPFW…QAIG. Arginine 154 provides a ligand contact to a 1,2-diacyl-sn-glycero-3-phospho-(1'-sn-glycerol). 3 helical membrane passes run 193–213, 223–243, and 266–286; these read PTFL…IFLF, LPPG…RFWI, and IAQL…WRIY.

The protein belongs to the Lgt family.

It is found in the cell inner membrane. It catalyses the reaction L-cysteinyl-[prolipoprotein] + a 1,2-diacyl-sn-glycero-3-phospho-(1'-sn-glycerol) = an S-1,2-diacyl-sn-glyceryl-L-cysteinyl-[prolipoprotein] + sn-glycerol 1-phosphate + H(+). Its pathway is protein modification; lipoprotein biosynthesis (diacylglyceryl transfer). In terms of biological role, catalyzes the transfer of the diacylglyceryl group from phosphatidylglycerol to the sulfhydryl group of the N-terminal cysteine of a prolipoprotein, the first step in the formation of mature lipoproteins. This Prochlorococcus marinus (strain NATL1A) protein is Phosphatidylglycerol--prolipoprotein diacylglyceryl transferase.